A 523-amino-acid chain; its full sequence is UDP-glucuronosyltransferase 3A1 (523 aa).

The N-terminal stretch at 1-22 (MAAHRSWLLVSFFLLEVLLLEA) is a signal peptide. Topologically, residues 23-487 (AKILTISTLS…QPWHEQYMLD (465 aa)) are extracellular. Residue asparagine 70 is glycosylated (N-linked (GlcNAc...) asparagine). A helical membrane pass occupies residues 488-508 (VFLFLLGLTLGTLWLSVKVLV). The Cytoplasmic segment spans residues 509–523 (AVTRYLSISRKVKQA).

Belongs to the UDP-glycosyltransferase family. In terms of tissue distribution, highly expressed in kidney, while it is expressed at low levels in liver. Not detected in other tissues examined.

The protein localises to the membrane. It catalyses the reaction glucuronate acceptor + UDP-alpha-D-glucuronate = acceptor beta-D-glucuronoside + UDP + H(+). UDP-glucuronosyltransferases catalyze phase II biotransformation reactions in which lipophilic substrates are conjugated with glucuronic acid to increase water solubility and enhance excretion. They are of major importance in the conjugation and subsequent elimination of potentially toxic xenobiotics and endogenous compounds. The sequence is that of UDP-glucuronosyltransferase 3A1 (Ugt3a1) from Mus musculus (Mouse).